The following is a 276-amino-acid chain: Large ribosomal subunit protein uL2 (276 aa).

The disordered stretch occupies residues 223-276; sequence GSAMNPVDHPHGGGEGKAPIGHPGPLTPWGKPTLGYKTRKKNKPSDKFIVKRRK. Over residues 265 to 276 the composition is skewed to basic and acidic residues; that stretch reads KPSDKFIVKRRK.

It belongs to the universal ribosomal protein uL2 family. In terms of assembly, part of the 50S ribosomal subunit. Forms a bridge to the 30S subunit in the 70S ribosome.

One of the primary rRNA binding proteins. Required for association of the 30S and 50S subunits to form the 70S ribosome, for tRNA binding and peptide bond formation. It has been suggested to have peptidyltransferase activity; this is somewhat controversial. Makes several contacts with the 16S rRNA in the 70S ribosome. This is Large ribosomal subunit protein uL2 from Caldicellulosiruptor saccharolyticus (strain ATCC 43494 / DSM 8903 / Tp8T 6331).